The following is a 384-amino-acid chain: Spermidine/putrescine import ATP-binding protein PotA (384 aa).

Positions 6 to 238 (IAFKNVSKVF…PINHFVATFI (233 aa)) constitute an ABC transporter domain. 40–47 (GASGSGKS) serves as a coordination point for ATP.

The protein belongs to the ABC transporter superfamily. Spermidine/putrescine importer (TC 3.A.1.11.1) family. The complex is composed of two ATP-binding proteins (PotA), two transmembrane proteins (PotB and PotC) and a solute-binding protein (PotD).

Its subcellular location is the cell membrane. The enzyme catalyses ATP + H2O + polyamine-[polyamine-binding protein]Side 1 = ADP + phosphate + polyamineSide 2 + [polyamine-binding protein]Side 1.. Its function is as follows. Part of the ABC transporter complex PotABCD involved in spermidine/putrescine import. Responsible for energy coupling to the transport system. This Streptococcus agalactiae serotype Ia (strain ATCC 27591 / A909 / CDC SS700) protein is Spermidine/putrescine import ATP-binding protein PotA.